Reading from the N-terminus, the 249-residue chain is Triosephosphate isomerase (249 aa).

Substrate is bound at residue 9 to 11 (NWK). The active-site Electrophile is histidine 95. Glutamate 167 acts as the Proton acceptor in catalysis. Substrate-binding positions include glycine 173, serine 213, and 234-235 (GG).

Belongs to the triosephosphate isomerase family. In terms of assembly, homodimer.

It localises to the cytoplasm. It catalyses the reaction D-glyceraldehyde 3-phosphate = dihydroxyacetone phosphate. It participates in carbohydrate biosynthesis; gluconeogenesis. The protein operates within carbohydrate degradation; glycolysis; D-glyceraldehyde 3-phosphate from glycerone phosphate: step 1/1. In terms of biological role, involved in the gluconeogenesis. Catalyzes stereospecifically the conversion of dihydroxyacetone phosphate (DHAP) to D-glyceraldehyde-3-phosphate (G3P). This chain is Triosephosphate isomerase, found in Dictyoglomus thermophilum (strain ATCC 35947 / DSM 3960 / H-6-12).